We begin with the raw amino-acid sequence, 252 residues long: Probable transcriptional regulatory protein THA_1246 (252 aa).

The protein belongs to the TACO1 family.

The protein resides in the cytoplasm. The chain is Probable transcriptional regulatory protein THA_1246 from Thermosipho africanus (strain TCF52B).